Reading from the N-terminus, the 219-residue chain is Histone H1.4 (219 aa).

Over residues 1–15 (MSETAPAAPAAPAPA) the composition is skewed to low complexity. The disordered stretch occupies residues 1–41 (MSETAPAAPAAPAPAEKTPVKKKARKAAGGAKRKTSGPPVS). S2 bears the N-acetylserine mark. A Phosphoserine modification is found at S2. K17 carries the N6-acetyllysine modification. T18 carries the post-translational modification Phosphothreonine. Basic residues predominate over residues 20–35 (VKKKARKAAGGAKRKT). Residue K26 is modified to N6-acetyllysine; alternate. Residue K26 is modified to N6-methyllysine; alternate. Position 34 is an N6-(beta-hydroxybutyryl)lysine; alternate (K34). K34 is subject to N6-succinyllysine; alternate. A Phosphoserine modification is found at S36. Residues 36 to 109 (SGPPVSELIT…GASGSFKLNK (74 aa)) enclose the H15 domain. At K52 the chain carries N6-(beta-hydroxybutyryl)lysine. R54 is modified (citrulline). N6-(beta-hydroxybutyryl)lysine occurs at positions 64, 85, 90, and 106. Residues 92-219 (TLVQTKGTGA…KPKKTAAKKK (128 aa)) form a disordered region. Basic residues predominate over residues 119-140 (KAKRAGAAKAKKPAGAAKKPKK). T146 is subject to Phosphothreonine. Basic residues-rich tracts occupy residues 149-160 (KSTKKTPKKAKK) and 168-185 (KKAK…KKAP). Residue S150 is modified to ADP-ribosylserine. S187 carries the post-translational modification Phosphoserine. Residues 192 to 219 (KTVKPKAAKPKTSKPKAAKPKKTAAKKK) are compositionally biased toward basic residues.

The protein belongs to the histone H1/H5 family. Citrullination at Arg-54 (H1R54ci) by PADI4 takes place within the DNA-binding site of H1 and results in its displacement from chromatin and global chromatin decondensation, thereby promoting pluripotency and stem cell maintenance. Post-translationally, ADP-ribosylated on Ser-55, Ser-113 and Ser-150 in response to DNA damage. In terms of processing, H1 histones are progressively phosphorylated during the cell cycle, becoming maximally phosphorylated during late G2 phase and M phase, and being dephosphorylated sharply thereafter. Acetylated at Lys-26. Deacetylated at Lys-26 by SIRT1. Post-translationally, hydroxybutyrylation of histones is induced by starvation.

It localises to the nucleus. Its subcellular location is the chromosome. Its function is as follows. Histone H1 protein binds to linker DNA between nucleosomes forming the macromolecular structure known as the chromatin fiber. Histones H1 are necessary for the condensation of nucleosome chains into higher-order structured fibers. Also acts as a regulator of individual gene transcription through chromatin remodeling, nucleosome spacing and DNA methylation. The polypeptide is Histone H1.4 (Mus musculus (Mouse)).